The following is a 275-amino-acid chain: Type III pantothenate kinase (275 aa).

Residue 6-13 (DAGNTNIV) participates in ATP binding. Position 108–111 (108–111 (GADR)) interacts with substrate. Catalysis depends on Asp110, which acts as the Proton acceptor. Residue Asp130 participates in K(+) binding. Thr133 provides a ligand contact to ATP. Thr187 serves as a coordination point for substrate.

Belongs to the type III pantothenate kinase family. In terms of assembly, homodimer. NH4(+) serves as cofactor. The cofactor is K(+).

It is found in the cytoplasm. The catalysed reaction is (R)-pantothenate + ATP = (R)-4'-phosphopantothenate + ADP + H(+). The protein operates within cofactor biosynthesis; coenzyme A biosynthesis; CoA from (R)-pantothenate: step 1/5. Its function is as follows. Catalyzes the phosphorylation of pantothenate (Pan), the first step in CoA biosynthesis. This chain is Type III pantothenate kinase, found in Zymomonas mobilis subsp. mobilis (strain ATCC 31821 / ZM4 / CP4).